Consider the following 415-residue polypeptide: Glutamyl-tRNA reductase (415 aa).

Substrate-binding positions include threonine 49–arginine 52, serine 104, glutamate 109–glutamine 111, and glutamine 115. Cysteine 50 functions as the Nucleophile in the catalytic mechanism. An NADP(+)-binding site is contributed by glycine 184–isoleucine 189.

The protein belongs to the glutamyl-tRNA reductase family. As to quaternary structure, homodimer.

The catalysed reaction is (S)-4-amino-5-oxopentanoate + tRNA(Glu) + NADP(+) = L-glutamyl-tRNA(Glu) + NADPH + H(+). The protein operates within porphyrin-containing compound metabolism; protoporphyrin-IX biosynthesis; 5-aminolevulinate from L-glutamyl-tRNA(Glu): step 1/2. Functionally, catalyzes the NADPH-dependent reduction of glutamyl-tRNA(Glu) to glutamate 1-semialdehyde (GSA). The polypeptide is Glutamyl-tRNA reductase (Neisseria meningitidis serogroup C (strain 053442)).